Consider the following 177-residue polypeptide: Large ribosomal subunit protein uL6 (177 aa).

This sequence belongs to the universal ribosomal protein uL6 family. Part of the 50S ribosomal subunit.

This protein binds to the 23S rRNA, and is important in its secondary structure. It is located near the subunit interface in the base of the L7/L12 stalk, and near the tRNA binding site of the peptidyltransferase center. This chain is Large ribosomal subunit protein uL6, found in Roseobacter denitrificans (strain ATCC 33942 / OCh 114) (Erythrobacter sp. (strain OCh 114)).